Here is a 65-residue protein sequence, read N- to C-terminus: Conotoxin TsMRCL-05 (65 aa).

The N-terminal stretch at 1–22 is a signal peptide; it reads MHCLPVLVILLLLIASTPSVDA. Residues 23–52 constitute a propeptide that is removed on maturation; that stretch reads RPNPKDDVPLASFHGAVNAKRYLRTLWNSR. I64 carries the post-translational modification Isoleucine amide.

Belongs to the conotoxin T superfamily. Contains 2 disulfide bonds that can be either 'C1-C3, C2-C4' or 'C1-C4, C2-C3', since these disulfide connectivities have been observed for conotoxins with cysteine framework V (for examples, see AC P0DQQ7 and AC P81755). In terms of tissue distribution, expressed by the venom duct.

It localises to the secreted. The protein is Conotoxin TsMRCL-05 of Conus tessulatus (Tessellate cone).